The chain runs to 320 residues: L-lactate dehydrogenase (320 aa).

NAD(+) is bound by residues V18, D39, R44, Y69, and 83-84 (GA). The substrate site is built by Q86 and R92. NAD(+)-binding positions include T105, 122–124 (AAN), and S147. A substrate-binding site is contributed by 124–127 (NPVD). 152 to 155 (DSAR) is a binding site for substrate. H179 (proton acceptor) is an active-site residue. Position 223 is a phosphotyrosine (Y223). Residue T232 coordinates substrate.

Belongs to the LDH/MDH superfamily. LDH family. As to quaternary structure, homotetramer.

It localises to the cytoplasm. The enzyme catalyses (S)-lactate + NAD(+) = pyruvate + NADH + H(+). It participates in fermentation; pyruvate fermentation to lactate; (S)-lactate from pyruvate: step 1/1. Catalyzes the conversion of lactate to pyruvate. The sequence is that of L-lactate dehydrogenase from Pediococcus pentosaceus (strain ATCC 25745 / CCUG 21536 / LMG 10740 / 183-1w).